The primary structure comprises 494 residues: ATP synthase subunit alpha, chloroplastic (494 aa).

Residue 170 to 177 (GDRQTGKT) coordinates ATP.

It belongs to the ATPase alpha/beta chains family. As to quaternary structure, F-type ATPases have 2 components, CF(1) - the catalytic core - and CF(0) - the membrane proton channel. CF(1) has five subunits: alpha(3), beta(3), gamma(1), delta(1), epsilon(1). CF(0) has four main subunits: a, b, b' and c.

It localises to the plastid. Its subcellular location is the chloroplast thylakoid membrane. It catalyses the reaction ATP + H2O + 4 H(+)(in) = ADP + phosphate + 5 H(+)(out). Functionally, produces ATP from ADP in the presence of a proton gradient across the membrane. The alpha chain is a regulatory subunit. The chain is ATP synthase subunit alpha, chloroplastic from Pinus thunbergii (Japanese black pine).